A 1411-amino-acid chain; its full sequence is DNA-directed RNA polymerase subunit beta' (1411 aa).

Residues C70, C72, C85, and C88 each coordinate Zn(2+). Mg(2+)-binding residues include D460, D462, and D464. Zn(2+)-binding residues include C814, C888, C895, and C898.

This sequence belongs to the RNA polymerase beta' chain family. In terms of assembly, the RNAP catalytic core consists of 2 alpha, 1 beta, 1 beta' and 1 omega subunit. When a sigma factor is associated with the core the holoenzyme is formed, which can initiate transcription. Requires Mg(2+) as cofactor. Zn(2+) is required as a cofactor.

The enzyme catalyses RNA(n) + a ribonucleoside 5'-triphosphate = RNA(n+1) + diphosphate. In terms of biological role, DNA-dependent RNA polymerase catalyzes the transcription of DNA into RNA using the four ribonucleoside triphosphates as substrates. The chain is DNA-directed RNA polymerase subunit beta' from Idiomarina loihiensis (strain ATCC BAA-735 / DSM 15497 / L2-TR).